Here is a 466-residue protein sequence, read N- to C-terminus: Asparagine--tRNA ligase (466 aa).

Belongs to the class-II aminoacyl-tRNA synthetase family. As to quaternary structure, homodimer.

It is found in the cytoplasm. The enzyme catalyses tRNA(Asn) + L-asparagine + ATP = L-asparaginyl-tRNA(Asn) + AMP + diphosphate + H(+). This chain is Asparagine--tRNA ligase, found in Salmonella paratyphi A (strain ATCC 9150 / SARB42).